The chain runs to 577 residues: Arginine--tRNA ligase (577 aa).

Residues 132–142 (ANPTGPLHVGH) carry the 'HIGH' region motif.

Belongs to the class-I aminoacyl-tRNA synthetase family. Monomer.

It is found in the cytoplasm. The catalysed reaction is tRNA(Arg) + L-arginine + ATP = L-arginyl-tRNA(Arg) + AMP + diphosphate. The chain is Arginine--tRNA ligase from Janthinobacterium sp. (strain Marseille) (Minibacterium massiliensis).